We begin with the raw amino-acid sequence, 107 residues long: MIIVTNTAKITKGNGHKLIDRFNKVGQVETMPGFLGLEVLLTQNTVDYDEVTISTRWNAKEDFQGWTKSPAFKDAHSHQGGMPDYILDNKITYYNVEVVRMPMAAAQ.

One can recognise an ABM domain in the interval 2–94 (IIVTNTAKIT…YILDNKITYY (93 aa)). Asn6 contributes to the Fe cation binding site. His76 contributes to the heme binding site.

Belongs to the antibiotic biosynthesis monooxygenase family. Heme-degrading monooxygenase IsdG subfamily. As to quaternary structure, homodimer.

The protein resides in the cytoplasm. It catalyses the reaction heme b + 3 reduced [NADPH--hemoprotein reductase] + 3 O2 = biliverdin IXalpha + CO + Fe(2+) + 3 oxidized [NADPH--hemoprotein reductase] + 3 H2O + H(+). Functionally, allows bacterial pathogens to use the host heme as an iron source. Catalyzes the oxidative degradation of the heme macrocyclic porphyrin ring to the biliverdin in the presence of a suitable electron donor such as ascorbate or NADPH--cytochrome P450 reductase, with subsequent release of free iron. The chain is Heme-degrading monooxygenase from Bacillus thuringiensis subsp. konkukian (strain 97-27).